We begin with the raw amino-acid sequence, 610 residues long: Elongation factor 4 (610 aa).

The tr-type G domain maps to 15–197; sequence KSIRNFSIIA…RIINDIPYPK (183 aa). GTP contacts are provided by residues 27-32 and 144-147; these read DHGKST and NKID.

The protein belongs to the TRAFAC class translation factor GTPase superfamily. Classic translation factor GTPase family. LepA subfamily.

It is found in the cell membrane. It carries out the reaction GTP + H2O = GDP + phosphate + H(+). In terms of biological role, required for accurate and efficient protein synthesis under certain stress conditions. May act as a fidelity factor of the translation reaction, by catalyzing a one-codon backward translocation of tRNAs on improperly translocated ribosomes. Back-translocation proceeds from a post-translocation (POST) complex to a pre-translocation (PRE) complex, thus giving elongation factor G a second chance to translocate the tRNAs correctly. Binds to ribosomes in a GTP-dependent manner. The chain is Elongation factor 4 from Buchnera aphidicola subsp. Acyrthosiphon pisum (strain 5A).